We begin with the raw amino-acid sequence, 313 residues long: Protein OPG185 (313 aa).

A signal peptide spans 1-16; it reads MTRLSILLLLISLVYS. At 17–277 the chain is on the virion surface side; sequence TPYPQTQISK…GKYSTKDYVK (261 aa). The Ig-like V-type domain occupies 18-121; sequence PYPQTQISKK…TTNDTDKVDY (104 aa). A disulfide bridge links cysteine 36 with cysteine 105. Asparagine 71, asparagine 114, asparagine 163, asparagine 182, and asparagine 262 each carry an N-linked (GlcNAc...) asparagine; by host glycan. A helical membrane pass occupies residues 278–301; the sequence is VFGIAALIILSAVAIFCITYYICN. At 302–313 the chain is on the intravirion side; it reads KRSRKYKTENKV.

Belongs to the orthopoxvirus OPG185 family. Heterodimerizes with OPG040. The heterodimer OPG185-OPG040 interacts with components of the entry fusion complex OPG143 and OPG094. Heterodimer with C3/VPC protein; disulfide-linked. Post-translationally, glycosylated; contains phosphate and sulfate-substituted glycans. O-glycosylation is required for hemagglutination and hemadsorption activities of infected cell membranes.

It is found in the virion membrane. The protein resides in the host membrane. Functionally, prevents cell to cell fusion by interacting with and directing the viral OPG040 protein on the host plasma membrane. The OPG185-OPG040 complex associates with components of the entry fusion complex (EFC) presumably to avoid superinfection and syncytium formation. Via its interaction with C3/VCP protein, protects the infected cell and probably also the extracellular enveloped virus from complement attack. This chain is Protein OPG185 (OPG185), found in Homo sapiens (Human).